Here is a 391-residue protein sequence, read N- to C-terminus: Putative B3 domain-containing protein Os08g0325100 (391 aa).

Residues Gly32–Val125 constitute a DNA-binding region (TF-B3). A disordered region spans residues Val143–Pro232. Over residues Glu172–Ala226 the composition is skewed to polar residues.

It localises to the nucleus. The chain is Putative B3 domain-containing protein Os08g0325100 from Oryza sativa subsp. japonica (Rice).